A 224-amino-acid polypeptide reads, in one-letter code: Response regulator protein GraR (224 aa).

The region spanning 2–115 (DILLVEDDMT…VLIAKLQAIY (114 aa)) is the Response regulatory domain. Asp-51 carries the 4-aspartylphosphate modification. A DNA-binding region (ompR/PhoB-type) is located at residues 126-224 (KRVLSWQDAI…KIGKGYMAHG (99 aa)).

Phosphorylated by GraS.

It is found in the cytoplasm. In terms of biological role, member of the two-component regulatory system GraR/GraS involved in resistance against cationic antimicrobial peptides (CAMPs). The protein is Response regulator protein GraR (graR) of Staphylococcus saprophyticus subsp. saprophyticus (strain ATCC 15305 / DSM 20229 / NCIMB 8711 / NCTC 7292 / S-41).